We begin with the raw amino-acid sequence, 62 residues long: Disintegrin schistatin-like subunit A (62 aa).

Residues 1–62 enclose the Disintegrin domain; it reads SVNPCCDPVI…TTDCPRNRYN (62 aa). Cystine bridges form between cysteine 5–cysteine 28, cysteine 19–cysteine 25, cysteine 24–cysteine 49, and cysteine 37–cysteine 56. The short motif at 41–43 is the Cell attachment site element; sequence RGD.

The protein belongs to the disintegrin family. Dimeric disintegrin subfamily. Heterodimer with subunit B; disulfide-linked. Expressed by the venom gland.

The protein localises to the secreted. Functionally, may bind to both alpha-IIb/beta-3 (ITGA2B/ITGB3) and alpha-V/beta-3 (ITGAV/ITGB3) integrins, and may inhibit platelet aggregation. The protein is Disintegrin schistatin-like subunit A of Echis carinatus (Saw-scaled viper).